Consider the following 365-residue polypeptide: Cobalt-precorrin-5B C(1)-methyltransferase (365 aa).

Belongs to the CbiD family.

The catalysed reaction is Co-precorrin-5B + S-adenosyl-L-methionine = Co-precorrin-6A + S-adenosyl-L-homocysteine. The protein operates within cofactor biosynthesis; adenosylcobalamin biosynthesis; cob(II)yrinate a,c-diamide from sirohydrochlorin (anaerobic route): step 6/10. Its function is as follows. Catalyzes the methylation of C-1 in cobalt-precorrin-5B to form cobalt-precorrin-6A. In Paraburkholderia phytofirmans (strain DSM 17436 / LMG 22146 / PsJN) (Burkholderia phytofirmans), this protein is Cobalt-precorrin-5B C(1)-methyltransferase.